Reading from the N-terminus, the 1673-residue chain is Protein TIC 214 (1673 aa).

6 helical membrane passes run Ala-32–Ile-52, Leu-70–Phe-90, Pro-93–Leu-113, Leu-130–Phe-150, Met-170–Cys-190, and Phe-218–Leu-238. Basic and acidic residues-rich tracts occupy residues Leu-264 to Thr-276 and Ser-283 to Glu-298. Disordered stretches follow at residues Leu-264–Glu-302, Val-547–Arg-611, Asn-1120–Leu-1146, and Gln-1370–Asp-1433. Polar residues predominate over residues Asp-562–Pro-586. Basic and acidic residues predominate over residues Thr-597–Arg-611. A compositionally biased stretch (polar residues) spans Asn-1120 to Leu-1135. The segment covering Gln-1370–Asn-1379 has biased composition (low complexity). Basic and acidic residues-rich tracts occupy residues Thr-1380–Glu-1399 and Thr-1406–Glu-1423.

Belongs to the TIC214 family. As to quaternary structure, part of the Tic complex.

The protein localises to the plastid. Its subcellular location is the chloroplast inner membrane. Its function is as follows. Involved in protein precursor import into chloroplasts. May be part of an intermediate translocation complex acting as a protein-conducting channel at the inner envelope. The protein is Protein TIC 214 of Cuscuta gronovii (Common dodder).